The primary structure comprises 368 residues: UPF0284 protein PCC8801_3324 (368 aa).

This sequence belongs to the UPF0284 family.

This chain is UPF0284 protein PCC8801_3324, found in Rippkaea orientalis (strain PCC 8801 / RF-1) (Cyanothece sp. (strain PCC 8801)).